The following is a 239-amino-acid chain: Ribitol-5-phosphate cytidylyltransferase (239 aa).

Residues 7–10 (FAGG) and 80–86 (GETGQMS) each bind CTP.

This sequence belongs to the IspD/TarI cytidylyltransferase family. TarI subfamily.

It carries out the reaction D-ribitol 5-phosphate + CTP + H(+) = CDP-L-ribitol + diphosphate. The protein operates within cell wall biogenesis; poly(ribitol phosphate) teichoic acid biosynthesis. Catalyzes the transfer of the cytidylyl group of CTP to D-ribitol 5-phosphate. In Streptococcus agalactiae serotype Ia (strain ATCC 27591 / A909 / CDC SS700), this protein is Ribitol-5-phosphate cytidylyltransferase.